A 409-amino-acid polypeptide reads, in one-letter code: Glucan endo-1,6-beta-glucosidase B (409 aa).

Positions 1–16 (MKFILPLFTSLPVALA) are cleaved as a signal peptide. Residue asparagine 35 is glycosylated (N-linked (GlcNAc...) asparagine). The Proton donor role is filled by glutamate 228. Residue glutamate 330 is the Nucleophile of the active site.

It belongs to the glycosyl hydrolase 5 (cellulase A) family.

It is found in the secreted. The enzyme catalyses Random hydrolysis of (1-&gt;6)-linkages in (1-&gt;6)-beta-D-glucans.. In terms of biological role, beta-glucanases participate in the metabolism of beta-glucan, the main structural component of the cell wall. Acts on lutean, pustulan and 1,6-oligo-beta-D-glucosides. The polypeptide is Glucan endo-1,6-beta-glucosidase B (exgB) (Emericella nidulans (strain FGSC A4 / ATCC 38163 / CBS 112.46 / NRRL 194 / M139) (Aspergillus nidulans)).